Reading from the N-terminus, the 1103-residue chain is Detocs histidine-protein kinase DtcA (1103 aa).

A Phosphohistidine; by autocatalysis modification is found at histidine 758. The stretch at 818–851 (TIINDAKEKVHINTGEFIESAKVFNYAIEIEFVE) is one TPR repeat.

In terms of processing, autophosphorylated.

It catalyses the reaction ATP + protein L-histidine = ADP + protein N-phospho-L-histidine.. Its function is as follows. Sensor-kinase member of the two-component regulatory system Detocs that confers resistance to bacteriophage. When the system (DtcA-DtcB-DtcC) is expressed in a susceptible E.coli (strain MG1655) it confers resistance to bacteriophages T2, T4, T5, T7, SECphi4, SECphi6 and SECphi27; the level of resistance varies, resistance to T2, T7 and SECphi4 is not very high. DtcA (this subunit) probably autophosphorylates upon sensing viral infection, and subsequently transfers the phosphate signal to DtcC which activates it, leading to an antiviral defense; DtcB may scavenge phosphorylation signals from accidental activation of DtcA. This is Detocs histidine-protein kinase DtcA from Enterobacter cloacae (strain JD6301).